A 485-amino-acid chain; its full sequence is Glutamyl-tRNA(Gln) amidotransferase subunit A (485 aa).

Active-site charge relay system residues include lysine 79 and serine 154. The active-site Acyl-ester intermediate is serine 178.

This sequence belongs to the amidase family. GatA subfamily. As to quaternary structure, heterotrimer of A, B and C subunits.

It catalyses the reaction L-glutamyl-tRNA(Gln) + L-glutamine + ATP + H2O = L-glutaminyl-tRNA(Gln) + L-glutamate + ADP + phosphate + H(+). Allows the formation of correctly charged Gln-tRNA(Gln) through the transamidation of misacylated Glu-tRNA(Gln) in organisms which lack glutaminyl-tRNA synthetase. The reaction takes place in the presence of glutamine and ATP through an activated gamma-phospho-Glu-tRNA(Gln). The polypeptide is Glutamyl-tRNA(Gln) amidotransferase subunit A (Clostridium botulinum (strain Eklund 17B / Type B)).